The chain runs to 319 residues: Acetyl-coenzyme A carboxylase carboxyl transferase subunit alpha (319 aa).

One can recognise a CoA carboxyltransferase C-terminal domain in the interval 38 to 292 (ALDKKAETLL…GKAIEMMLKE (255 aa)).

This sequence belongs to the AccA family. In terms of assembly, acetyl-CoA carboxylase is a heterohexamer composed of biotin carboxyl carrier protein (AccB), biotin carboxylase (AccC) and two subunits each of ACCase subunit alpha (AccA) and ACCase subunit beta (AccD).

It is found in the cytoplasm. The enzyme catalyses N(6)-carboxybiotinyl-L-lysyl-[protein] + acetyl-CoA = N(6)-biotinyl-L-lysyl-[protein] + malonyl-CoA. The protein operates within lipid metabolism; malonyl-CoA biosynthesis; malonyl-CoA from acetyl-CoA: step 1/1. Functionally, component of the acetyl coenzyme A carboxylase (ACC) complex. First, biotin carboxylase catalyzes the carboxylation of biotin on its carrier protein (BCCP) and then the CO(2) group is transferred by the carboxyltransferase to acetyl-CoA to form malonyl-CoA. The protein is Acetyl-coenzyme A carboxylase carboxyl transferase subunit alpha of Cereibacter sphaeroides (strain ATCC 17029 / ATH 2.4.9) (Rhodobacter sphaeroides).